Consider the following 165-residue polypeptide: MASEHSFDISAEVDMMEVKNALETAKKEIAARYDFKGLAAEVELNEKEKFITLLSSSDNKIDALKDIVISKLIKRNIPPVAITETKREPASGGNLKATLKLNDTLDSENSKKITKAIKDSKIKVSAQIRGEEIRVTSKSIDDLQECIKLVRGLNLELPISFKNLK.

It belongs to the YajQ family.

Functionally, nucleotide-binding protein. This Campylobacter concisus (strain 13826) protein is Nucleotide-binding protein Ccon26_01810.